Here is a 282-residue protein sequence, read N- to C-terminus: Protoheme IX farnesyltransferase (282 aa).

The next 9 helical transmembrane spans lie at 9–29 (LAKPGIIFGNLITLTGGFLLA), 39–59 (LPLFVYVMIGVALMIAAGCVF), 79–99 (LVTGDISVIQATIYGTILLIL), 102–122 (LVLYYLVILLTLWIIIIGFIV), 139–159 (VLGGISGAIPPVAGYTAVVNI), 165–185 (LALFLILFFWQIPHSYAIAML), 210–230 (IMLFYLALFVVSCALPAVLGS), 231–251 (ADLFSFIVCMLVALFWMYKSI), and 261–281 (VFAKTVFKFSIIVITVICLTM).

It belongs to the UbiA prenyltransferase family. Protoheme IX farnesyltransferase subfamily.

It localises to the cell inner membrane. The enzyme catalyses heme b + (2E,6E)-farnesyl diphosphate + H2O = Fe(II)-heme o + diphosphate. The protein operates within porphyrin-containing compound metabolism; heme O biosynthesis; heme O from protoheme: step 1/1. In terms of biological role, converts heme B (protoheme IX) to heme O by substitution of the vinyl group on carbon 2 of heme B porphyrin ring with a hydroxyethyl farnesyl side group. This is Protoheme IX farnesyltransferase from Francisella tularensis subsp. tularensis (strain FSC 198).